A 116-amino-acid chain; its full sequence is Large ribosomal subunit protein uL14m (116 aa).

This sequence belongs to the universal ribosomal protein uL14 family.

It localises to the mitochondrion. The chain is Large ribosomal subunit protein uL14m (RPL14) from Acanthamoeba polyphaga (Amoeba).